The chain runs to 375 residues: Beta sliding clamp (375 aa).

It belongs to the beta sliding clamp family. Forms a ring-shaped head-to-tail homodimer around DNA which binds and tethers DNA polymerases and other proteins to the DNA. The DNA replisome complex has a single clamp-loading complex (3 tau and 1 each of delta, delta', psi and chi subunits) which binds 3 Pol III cores (1 core on the leading strand and 2 on the lagging strand) each with a beta sliding clamp dimer. Additional proteins in the replisome are other copies of gamma, psi and chi, Ssb, DNA helicase and RNA primase.

The protein resides in the cytoplasm. In terms of biological role, confers DNA tethering and processivity to DNA polymerases and other proteins. Acts as a clamp, forming a ring around DNA (a reaction catalyzed by the clamp-loading complex) which diffuses in an ATP-independent manner freely and bidirectionally along dsDNA. Initially characterized for its ability to contact the catalytic subunit of DNA polymerase III (Pol III), a complex, multichain enzyme responsible for most of the replicative synthesis in bacteria; Pol III exhibits 3'-5' exonuclease proofreading activity. The beta chain is required for initiation of replication as well as for processivity of DNA replication. The chain is Beta sliding clamp (dnaN) from Mycoplasma capricolum subsp. capricolum (strain California kid / ATCC 27343 / NCTC 10154).